The following is an 80-amino-acid chain: Small ribosomal subunit protein uS17 (80 aa).

This sequence belongs to the universal ribosomal protein uS17 family. As to quaternary structure, part of the 30S ribosomal subunit.

One of the primary rRNA binding proteins, it binds specifically to the 5'-end of 16S ribosomal RNA. The protein is Small ribosomal subunit protein uS17 of Brucella suis (strain ATCC 23445 / NCTC 10510).